A 137-amino-acid polypeptide reads, in one-letter code: Putative pre-16S rRNA nuclease (137 aa).

This sequence belongs to the YqgF nuclease family.

Its subcellular location is the cytoplasm. Its function is as follows. Could be a nuclease involved in processing of the 5'-end of pre-16S rRNA. This chain is Putative pre-16S rRNA nuclease, found in Flavobacterium psychrophilum (strain ATCC 49511 / DSM 21280 / CIP 103535 / JIP02/86).